We begin with the raw amino-acid sequence, 272 residues long: ATP synthase subunit a (272 aa).

5 helical membrane-spanning segments follow: residues V41–F61, V101–L121, D147–I167, L221–P241, and A243–V263.

It belongs to the ATPase A chain family. As to quaternary structure, F-type ATPases have 2 components, CF(1) - the catalytic core - and CF(0) - the membrane proton channel. CF(1) has five subunits: alpha(3), beta(3), gamma(1), delta(1), epsilon(1). CF(0) has three main subunits: a(1), b(2) and c(9-12). The alpha and beta chains form an alternating ring which encloses part of the gamma chain. CF(1) is attached to CF(0) by a central stalk formed by the gamma and epsilon chains, while a peripheral stalk is formed by the delta and b chains.

It is found in the cell inner membrane. In terms of biological role, key component of the proton channel; it plays a direct role in the translocation of protons across the membrane. The sequence is that of ATP synthase subunit a from Erwinia tasmaniensis (strain DSM 17950 / CFBP 7177 / CIP 109463 / NCPPB 4357 / Et1/99).